A 65-amino-acid chain; its full sequence is UPF0434 protein IL1511 (65 aa).

This sequence belongs to the UPF0434 family.

The protein is UPF0434 protein IL1511 of Idiomarina loihiensis (strain ATCC BAA-735 / DSM 15497 / L2-TR).